A 218-amino-acid chain; its full sequence is Adapter protein MecA (218 aa).

It belongs to the MecA family. In terms of assembly, homodimer.

Functionally, enables the recognition and targeting of unfolded and aggregated proteins to the ClpC protease or to other proteins involved in proteolysis. The sequence is that of Adapter protein MecA from Exiguobacterium sp. (strain ATCC BAA-1283 / AT1b).